The following is a 483-amino-acid chain: Glycogen synthase (483 aa).

Lysine 15 is a binding site for ADP-alpha-D-glucose.

This sequence belongs to the glycosyltransferase 1 family. Bacterial/plant glycogen synthase subfamily.

The enzyme catalyses [(1-&gt;4)-alpha-D-glucosyl](n) + ADP-alpha-D-glucose = [(1-&gt;4)-alpha-D-glucosyl](n+1) + ADP + H(+). It participates in glycan biosynthesis; glycogen biosynthesis. In terms of biological role, synthesizes alpha-1,4-glucan chains using ADP-glucose. This is Glycogen synthase from Desulfatibacillum aliphaticivorans.